Reading from the N-terminus, the 104-residue chain is Large ribosomal subunit protein uL24 (104 aa).

The protein belongs to the universal ribosomal protein uL24 family. In terms of assembly, part of the 50S ribosomal subunit.

Functionally, one of two assembly initiator proteins, it binds directly to the 5'-end of the 23S rRNA, where it nucleates assembly of the 50S subunit. One of the proteins that surrounds the polypeptide exit tunnel on the outside of the subunit. The chain is Large ribosomal subunit protein uL24 from Bartonella tribocorum (strain CIP 105476 / IBS 506).